A 281-amino-acid polypeptide reads, in one-letter code: NH(3)-dependent NAD(+) synthetase (281 aa).

Gly24–Ser31 contributes to the ATP binding site. Asp30 lines the Mg(2+) pocket. Deamido-NAD(+) is bound at residue Arg145. Thr165 contacts ATP. Glu170 contributes to the Mg(2+) binding site. Deamido-NAD(+) is bound by residues Lys178 and Asp185. ATP contacts are provided by Lys194 and Ser216.

It belongs to the NAD synthetase family. As to quaternary structure, homodimer.

The enzyme catalyses deamido-NAD(+) + NH4(+) + ATP = AMP + diphosphate + NAD(+) + H(+). It participates in cofactor biosynthesis; NAD(+) biosynthesis; NAD(+) from deamido-NAD(+) (ammonia route): step 1/1. In terms of biological role, catalyzes the ATP-dependent amidation of deamido-NAD to form NAD. Uses ammonia as a nitrogen source. The polypeptide is NH(3)-dependent NAD(+) synthetase (nadE1) (Thermotoga maritima (strain ATCC 43589 / DSM 3109 / JCM 10099 / NBRC 100826 / MSB8)).